The primary structure comprises 754 residues: MIKRWLSVNRKKSHPEKNTQGNDEINRKATSLKKTKGSGDPSIAKSPSAKSSTSSIPSNLASHERRSKFSSQTDNLAGNKHYHEHYHNMASTSDEREYDSSTTYEDRAFDTESSILFTTITDLMPYGDGSNKVFGYENFGNTCYCNSVLQCLYNIPEFRCNVLRYPERVAAVNRIRKSDLKGSKIRVFTNESFETSTNSGNSNTGYQSNDNEDAHNHHHLQQSDQDNSSSSTQEKQNNFERKRNSFMGFGKDKSNYKDSAKKDDNNEMERPQPVHTVVMASDTLTEKLHEGCKKIIVGRPLLKQSDSLSKASTTDCQANSHCQCDSQGSRITSVDDDVLVNPESCNDAVNNSNNNKENTFPTSEQRKKAALIRGPVLNVDHLLYPTEEATLYNGLKDIFESITENLSLTGIVSPTEFVKILKKENVLFNTMMQQDAHEFLNFLLNDFSEYIQRNNPRMRFGPQKTDNSNDNFITDLFKGTLTNRIKCLTCDNITSRDEPFLDFPIEVQGDEETDIQKMLKSYHQREMLNGVNKFYCNKCYGLQEAERMVGLKQLPHILSLHLKRFKYSEEQKSNIKLFNKILYPLTLDVSSTFNTSVYKKYELSGVVIHMGSGPQHGHYVCICRNEKFGWLLYDDETVESIKEETVLQFTGHPGDQTTAYVLFYKETQADKTENQNENIDTSSQDQMQTDNNIEQLIKCDDWLRDRKLRAAANIERKKTLGNIPEVKTAETKTPLNDKKRNKQKRKSRILSFIK.

The span at Met-1–His-14 shows a compositional bias: basic residues. The segment at Met-1 to Leu-76 is disordered. A compositionally biased stretch (low complexity) spans Ser-42–Ser-58. Residues Phe-134–Thr-667 enclose the USP domain. Cys-143 acts as the Nucleophile in catalysis. The segment covering Glu-194–Asn-209 has biased composition (polar residues). A disordered region spans residues Glu-194 to Pro-273. Residues Gln-222–Gln-233 are compositionally biased toward low complexity. A compositionally biased stretch (basic and acidic residues) spans Gly-250–Gln-272. Catalysis depends on His-618, which acts as the Proton acceptor. The interval Val-726–Lys-754 is disordered. Residues Lys-727–Lys-738 show a composition bias toward basic and acidic residues. Residues Lys-739–Arg-748 show a composition bias toward basic residues.

It belongs to the peptidase C19 family.

The enzyme catalyses Thiol-dependent hydrolysis of ester, thioester, amide, peptide and isopeptide bonds formed by the C-terminal Gly of ubiquitin (a 76-residue protein attached to proteins as an intracellular targeting signal).. This is Ubiquitin carboxyl-terminal hydrolase 9 (UBP9) from Saccharomyces cerevisiae (strain ATCC 204508 / S288c) (Baker's yeast).